The sequence spans 117 residues: Minor capsid protein VP2 (117 aa).

This sequence belongs to the lagovirus VP2 protein family. In terms of assembly, homooligomer. The portal-like structure consists in 12 copies of VP2. Interacts with capsid protein VP1.

It localises to the virion. The protein resides in the host cytoplasm. Minor structural protein that forms a portal-like structure at a unique three-fold axis of symmetry, following binding to the host receptor. The channel formed by VP2 may allow the delivery of the viral genome through the host endosomal membrane. This chain is Minor capsid protein VP2, found in Rabbit hemorrhagic disease virus (strain AST89) (Ra/LV/RHDV/AST89/1989/SP).